A 293-amino-acid polypeptide reads, in one-letter code: Cbb3-type cytochrome c oxidase subunit FixP (293 aa).

Positions Met1 to Pro11 are enriched in basic and acidic residues. Residues Met1–Trp25 are disordered. A helical transmembrane segment spans residues Phe43–Val63. Cytochrome c domains are found at residues Leu114–Ser201 and Pro209–Gly290. The heme c site is built by Cys127, Cys130, His131, Met178, Cys222, Cys225, His226, and Met267.

It belongs to the CcoP / FixP family. In terms of assembly, component of the cbb3-type cytochrome c oxidase at least composed of FixN, FixO, FixQ and FixP. Heme c serves as cofactor.

It is found in the cell inner membrane. It participates in energy metabolism; oxidative phosphorylation. Functionally, C-type cytochrome. Part of the cbb3-type cytochrome c oxidase complex. FixP subunit is required for transferring electrons from donor cytochrome c via its heme groups to FixO subunit. From there, electrons are shuttled to the catalytic binuclear center of FixN subunit where oxygen reduction takes place. The complex also functions as a proton pump. The chain is Cbb3-type cytochrome c oxidase subunit FixP from Azorhizobium caulinodans (strain ATCC 43989 / DSM 5975 / JCM 20966 / LMG 6465 / NBRC 14845 / NCIMB 13405 / ORS 571).